We begin with the raw amino-acid sequence, 160 residues long: ATP synthase subunit b (160 aa).

The chain crosses the membrane as a helical span at residues 15-35 (LVIVIGLLFWFLRGFLGGILE).

The protein belongs to the ATPase B chain family. As to quaternary structure, F-type ATPases have 2 components, F(1) - the catalytic core - and F(0) - the membrane proton channel. F(1) has five subunits: alpha(3), beta(3), gamma(1), delta(1), epsilon(1). F(0) has four main subunits: a(1), b(1), b'(1) and c(10-14). The alpha and beta chains form an alternating ring which encloses part of the gamma chain. F(1) is attached to F(0) by a central stalk formed by the gamma and epsilon chains, while a peripheral stalk is formed by the delta, b and b' chains.

It localises to the cellular thylakoid membrane. Functionally, f(1)F(0) ATP synthase produces ATP from ADP in the presence of a proton or sodium gradient. F-type ATPases consist of two structural domains, F(1) containing the extramembraneous catalytic core and F(0) containing the membrane proton channel, linked together by a central stalk and a peripheral stalk. During catalysis, ATP synthesis in the catalytic domain of F(1) is coupled via a rotary mechanism of the central stalk subunits to proton translocation. Component of the F(0) channel, it forms part of the peripheral stalk, linking F(1) to F(0). This is ATP synthase subunit b from Synechococcus sp. (strain CC9605).